A 533-amino-acid polypeptide reads, in one-letter code: GMP synthase [glutamine-hydrolyzing] (533 aa).

Residues 25-215 (SIVIFDFGSQ…VFNICKCHAN (191 aa)) enclose the Glutamine amidotransferase type-1 domain. The active-site Nucleophile is Cys-102. Catalysis depends on residues His-189 and Glu-191. The region spanning 216–408 (WTMGNYIQES…LGLPDEMIWR (193 aa)) is the GMPS ATP-PPase domain. An ATP-binding site is contributed by 243–249 (SGGVDSA).

Homodimer.

The catalysed reaction is XMP + L-glutamine + ATP + H2O = GMP + L-glutamate + AMP + diphosphate + 2 H(+). The protein operates within purine metabolism; GMP biosynthesis; GMP from XMP (L-Gln route): step 1/1. Functionally, catalyzes the synthesis of GMP from XMP. The sequence is that of GMP synthase [glutamine-hydrolyzing] from Dehalococcoides mccartyi (strain ATCC BAA-2266 / KCTC 15142 / 195) (Dehalococcoides ethenogenes (strain 195)).